The chain runs to 1830 residues: Urea amidolyase (1830 aa).

Residues 115–122, Lys-740, Glu-823, and Asn-858 contribute to the ATP site; that span reads GAIVIGKT. A Biotin carboxylation domain is found at 625–1068; that stretch reads PFETVLIANR…ATKILDSYDY (444 aa). In terms of domain architecture, ATP-grasp spans 744–941; that stretch reads REIAEKAGVP…LVEWMLRIAA (198 aa). The 79-residue stretch at 1752–1830 folds into the Biotinyl-binding domain; the sequence is AVEEEYPEDA…DAGDLVAVIQ (79 aa). Lys-1796 carries the N6-biotinyllysine modification.

It belongs to the DUR1,2 family. In terms of assembly, monomer. The cofactor is biotin.

The catalysed reaction is urea + hydrogencarbonate + ATP = urea-1-carboxylate + ADP + phosphate + H(+). It catalyses the reaction urea-1-carboxylate + H2O + 3 H(+) = 2 NH4(+) + 2 CO2. It participates in nitrogen metabolism; urea degradation; CO(2) and NH(3) from urea (allophanate route): step 1/2. It functions in the pathway nitrogen metabolism; urea degradation; CO(2) and NH(3) from urea (allophanate route): step 2/2. Its function is as follows. Involved in uracil catabolism. Hydrolysis of urea to ammonia and CO(2). In Lachancea kluyveri (Yeast), this protein is Urea amidolyase (DUR1,2).